The chain runs to 346 residues: UPF0065 protein in the TAR-I ttuE-ttuC' intergenic region (346 aa).

The signal sequence occupies residues Met-1–Ala-46.

Belongs to the UPF0065 (bug) family.

Its subcellular location is the periplasm. The protein is UPF0065 protein in the TAR-I ttuE-ttuC' intergenic region of Agrobacterium vitis (Rhizobium vitis).